The chain runs to 285 residues: MTRYRDVLELHTGHPASDGAGVRLTRVIGGPSPERFDPFLMLDQFDTQNPDDYVAGFPSHPHRGFETVTYMLEGRMRHEDHLGNRGLLKPGGVQWMTAAHGIIHSEMPEQVEGAMRGFQLWVNLPAKNKLAPAGYRDIEPEDVPRLETAGGVKVTVIAGRFDDGQAQQIGAVERPDTEPHYYDLQLPAGGRIAPRLPDGHRVLLYVYEGSLTVEGERPVEIATNRLARLSEEGELSLRSEAGARVLVLAGKPLHEPIVQYGPFVMNSREEIEQALRDYRDGVLAV.

Residues histidine 60, histidine 62, histidine 104, and glutamate 106 each contribute to the a divalent metal cation site.

Belongs to the pirin family. It depends on a divalent metal cation as a cofactor.

It carries out the reaction quercetin + O2 = 2-(3,4-dihydroxybenzoyloxy)-4,6-dihydroxybenzoate + CO. It participates in flavonoid metabolism; quercetin degradation. In terms of biological role, putative quercetin 2,3-dioxygenase. The polypeptide is Putative quercetin 2,3-dioxygenase PA3240 (Pseudomonas aeruginosa (strain ATCC 15692 / DSM 22644 / CIP 104116 / JCM 14847 / LMG 12228 / 1C / PRS 101 / PAO1)).